Here is a 195-residue protein sequence, read N- to C-terminus: Probable peroxygenase 4 (195 aa).

Residues 14 to 49 (EEDNFLQRHVAFFDRNKDGIVYPSETFQGFRAIGCG) form the EF-hand domain. His-22 contributes to the heme binding site. Ca(2+)-binding residues include Asp-27, Asn-29, Asp-31, and Glu-38. Positions 70–79 (PGKGFSIWFP) match the Proline-knot motif. Ser-177 bears the Phosphoserine mark.

It belongs to the caleosin family. In terms of assembly, homodimer. The cofactor is heme b. It depends on Ca(2+) as a cofactor. In terms of tissue distribution, expressed in roots, leaves, stems, shoots, flowers and germinated seeds. Barely detected in dry seeds prior to germination. Preferentially expressed in vascular bundles and in guard cells.

It is found in the lipid droplet. The catalysed reaction is RH + ROOH = ROH + ROH.. Functionally, calcium-binding peroxygenase involved in the degradation of storage lipid in oil bodies. May be involved in the interaction between oil bodies and vacuoles during seed germination. Acts as a negative regulator of abscisic acid responses in non-seed tissues. In Arabidopsis thaliana (Mouse-ear cress), this protein is Probable peroxygenase 4 (PXG4).